Reading from the N-terminus, the 488-residue chain is MQWEVVIGLETHTQLSTVSKIFSGASTAFGAAPNTQAAPVDLALPGVLPVLNKGAVERAIVFGLAIGAKIAPKSIFARKNYFYPDLPKGYQISQYEIPVVQGGTLTFQVEGKNGQPGYEKTVQLTRAHLEEDAGKSLHEDFAGMTGIDLNRAGTPLLEIVTEPDMRSAAEAVAYAKALHALVMWLGICDGNMQEGSFRCDANVSVRRGPDAPFGTRCEIKNLNSFRFLEEAINYEVRRQIELIEDGGTVVQETRLYDPDRKETRSMRSKEDAQDYRYFPDPDLLPLVIGDDWIERVRATLPELPAAMAARFESAYGLPKYDASILTATKATAAYFEAVVADAGAANAKAAANWIMGEVASNLNRADLDIDAAPVSPAQLAKLLARIADGTISNNTAKKDVFPAMWAGEHGGDADAIIAEKGLKQMSDSGELEKIIDDVLAANAKSVEEFRAGKEKAFNALVGQAMKATRGKANPAQVNDLLKKKLGAA.

The protein belongs to the GatB/GatE family. GatB subfamily. Heterotrimer of A, B and C subunits.

It catalyses the reaction L-glutamyl-tRNA(Gln) + L-glutamine + ATP + H2O = L-glutaminyl-tRNA(Gln) + L-glutamate + ADP + phosphate + H(+). The catalysed reaction is L-aspartyl-tRNA(Asn) + L-glutamine + ATP + H2O = L-asparaginyl-tRNA(Asn) + L-glutamate + ADP + phosphate + 2 H(+). Functionally, allows the formation of correctly charged Asn-tRNA(Asn) or Gln-tRNA(Gln) through the transamidation of misacylated Asp-tRNA(Asn) or Glu-tRNA(Gln) in organisms which lack either or both of asparaginyl-tRNA or glutaminyl-tRNA synthetases. The reaction takes place in the presence of glutamine and ATP through an activated phospho-Asp-tRNA(Asn) or phospho-Glu-tRNA(Gln). This is Aspartyl/glutamyl-tRNA(Asn/Gln) amidotransferase subunit B from Ralstonia pickettii (strain 12J).